The sequence spans 193 residues: Oligoribonuclease (193 aa).

In terms of domain architecture, Exonuclease spans 8–171 (LVWLDLEMTG…EDIRESVAEL (164 aa)). Tyr-129 is a catalytic residue.

Belongs to the oligoribonuclease family.

It localises to the cytoplasm. Its function is as follows. 3'-to-5' exoribonuclease specific for small oligoribonucleotides. This chain is Oligoribonuclease, found in Alkalilimnicola ehrlichii (strain ATCC BAA-1101 / DSM 17681 / MLHE-1).